A 184-amino-acid chain; its full sequence is ATP-dependent protease subunit HslV (184 aa).

Threonine 12 is an active-site residue. Alanine 166, cysteine 169, and threonine 172 together coordinate Na(+).

Belongs to the peptidase T1B family. HslV subfamily. A double ring-shaped homohexamer of HslV is capped on each side by a ring-shaped HslU homohexamer. The assembly of the HslU/HslV complex is dependent on binding of ATP.

It is found in the cytoplasm. It carries out the reaction ATP-dependent cleavage of peptide bonds with broad specificity.. Allosterically activated by HslU binding. Protease subunit of a proteasome-like degradation complex believed to be a general protein degrading machinery. This chain is ATP-dependent protease subunit HslV, found in Brucella canis (strain ATCC 23365 / NCTC 10854 / RM-666).